The sequence spans 295 residues: ATP synthase gamma chain (295 aa).

Belongs to the ATPase gamma chain family. F-type ATPases have 2 components, CF(1) - the catalytic core - and CF(0) - the membrane proton channel. CF(1) has five subunits: alpha(3), beta(3), gamma(1), delta(1), epsilon(1). CF(0) has three main subunits: a, b and c.

It localises to the cell inner membrane. Functionally, produces ATP from ADP in the presence of a proton gradient across the membrane. The gamma chain is believed to be important in regulating ATPase activity and the flow of protons through the CF(0) complex. The sequence is that of ATP synthase gamma chain from Bdellovibrio bacteriovorus (strain ATCC 15356 / DSM 50701 / NCIMB 9529 / HD100).